Here is a 520-residue protein sequence, read N- to C-terminus: MAKIGRALISVSEKTGVVEFSRALAGYGVEILSTGGTAKLLREAGIAVKDVSEFTGFPEMLDGRVKTLHPKVHGGILGMRENPAHVAKMQEHGIEPIDMVVVNLYPFEATVAKEDCTMEDAIENIDIGGPTMLRSAAKNNRDVTVVVDHADYAVVLDEMKNSGGSVSRETNFRLAVKVYQHTAAYDGAISNWLGARTGEGVAPFPDTLTMQYKLAQGMRYGENPHQSGAFYVEKGSRESSISTARQIQGKELSYNNIGDTDAALECVKQFTEPACVIVKHANPCGVALGANIMEAYDKAYKTDPESAFGGIIAFNRELDESTARAIVERQFVEVIIAPKVTEAASEIVAAKKNVRLMECGFWPENPAPRFDYKRVNGGMLVQDADLELFTELKVVTKRAPTDKEMEDLLFTWRVAKFVKSNAIVYGRDNSTVGVGAGQMSRVNSARIAAIKAEHAGIPVQGAVMASDAFFPFRDGLDNAASVGVTAVIQPGGSMRDAEVIAAADEHGIAMVFTSMRHFRH.

An MGS-like domain is found at 1 to 147; the sequence is MAKIGRALIS…KNNRDVTVVV (147 aa).

The protein belongs to the PurH family.

The catalysed reaction is (6R)-10-formyltetrahydrofolate + 5-amino-1-(5-phospho-beta-D-ribosyl)imidazole-4-carboxamide = 5-formamido-1-(5-phospho-D-ribosyl)imidazole-4-carboxamide + (6S)-5,6,7,8-tetrahydrofolate. The enzyme catalyses IMP + H2O = 5-formamido-1-(5-phospho-D-ribosyl)imidazole-4-carboxamide. It participates in purine metabolism; IMP biosynthesis via de novo pathway; 5-formamido-1-(5-phospho-D-ribosyl)imidazole-4-carboxamide from 5-amino-1-(5-phospho-D-ribosyl)imidazole-4-carboxamide (10-formyl THF route): step 1/1. It functions in the pathway purine metabolism; IMP biosynthesis via de novo pathway; IMP from 5-formamido-1-(5-phospho-D-ribosyl)imidazole-4-carboxamide: step 1/1. In Citrifermentans bemidjiense (strain ATCC BAA-1014 / DSM 16622 / JCM 12645 / Bem) (Geobacter bemidjiensis), this protein is Bifunctional purine biosynthesis protein PurH.